The sequence spans 110 residues: Phosphoribosyl-ATP pyrophosphatase (110 aa).

The protein belongs to the PRA-PH family.

It is found in the cytoplasm. It catalyses the reaction 1-(5-phospho-beta-D-ribosyl)-ATP + H2O = 1-(5-phospho-beta-D-ribosyl)-5'-AMP + diphosphate + H(+). It functions in the pathway amino-acid biosynthesis; L-histidine biosynthesis; L-histidine from 5-phospho-alpha-D-ribose 1-diphosphate: step 2/9. This Stutzerimonas stutzeri (strain A1501) (Pseudomonas stutzeri) protein is Phosphoribosyl-ATP pyrophosphatase.